The following is a 296-amino-acid chain: ATP synthase gamma chain (296 aa).

This sequence belongs to the ATPase gamma chain family. In terms of assembly, F-type ATPases have 2 components, CF(1) - the catalytic core - and CF(0) - the membrane proton channel. CF(1) has five subunits: alpha(3), beta(3), gamma(1), delta(1), epsilon(1). CF(0) has three main subunits: a, b and c.

It is found in the cell inner membrane. Produces ATP from ADP in the presence of a proton gradient across the membrane. The gamma chain is believed to be important in regulating ATPase activity and the flow of protons through the CF(0) complex. This is ATP synthase gamma chain from Methylorubrum extorquens (strain CM4 / NCIMB 13688) (Methylobacterium extorquens).